The chain runs to 101 residues: Small ribosomal subunit protein uS14 (101 aa).

This sequence belongs to the universal ribosomal protein uS14 family. In terms of assembly, part of the 30S ribosomal subunit. Contacts proteins S3 and S10.

Functionally, binds 16S rRNA, required for the assembly of 30S particles and may also be responsible for determining the conformation of the 16S rRNA at the A site. In Rhizobium meliloti (strain 1021) (Ensifer meliloti), this protein is Small ribosomal subunit protein uS14.